The chain runs to 39 residues: Photosystem II reaction center protein X (39 aa).

The chain crosses the membrane as a helical span at residues 10-30 (WSLLWGTAIVVIPVTVGLIFI).

The protein belongs to the PsbX family. Type 1 subfamily. PSII is composed of 1 copy each of membrane proteins PsbA, PsbB, PsbC, PsbD, PsbE, PsbF, PsbH, PsbI, PsbJ, PsbK, PsbL, PsbM, PsbT, PsbX, PsbY, PsbZ, Psb30/Ycf12, peripheral proteins PsbO, CyanoQ (PsbQ), PsbU, PsbV and a large number of cofactors. It forms dimeric complexes.

Its subcellular location is the cellular thylakoid membrane. Its function is as follows. Involved in the binding and/or turnover of quinones at the Q(B) site of photosystem II (PSII). PSII is a light-driven water plastoquinone oxidoreductase, using light energy to abstract electrons from H(2)O, generating a proton gradient subsequently used for ATP formation. This Nostoc punctiforme (strain ATCC 29133 / PCC 73102) protein is Photosystem II reaction center protein X.